The chain runs to 277 residues: 4-deoxy-L-threo-5-hexosulose-uronate ketol-isomerase (277 aa).

4 residues coordinate Zn(2+): His-195, His-197, Glu-202, and His-244.

The protein belongs to the KduI family. Zn(2+) serves as cofactor.

It catalyses the reaction 5-dehydro-4-deoxy-D-glucuronate = 3-deoxy-D-glycero-2,5-hexodiulosonate. It participates in glycan metabolism; pectin degradation; 2-dehydro-3-deoxy-D-gluconate from pectin: step 4/5. In terms of biological role, catalyzes the isomerization of 5-dehydro-4-deoxy-D-glucuronate to 3-deoxy-D-glycero-2,5-hexodiulosonate. In Oceanobacillus iheyensis (strain DSM 14371 / CIP 107618 / JCM 11309 / KCTC 3954 / HTE831), this protein is 4-deoxy-L-threo-5-hexosulose-uronate ketol-isomerase.